The following is a 739-amino-acid chain: DNA ligase (739 aa).

34–38 (DADYD) provides a ligand contact to NAD(+). Basic and acidic residues predominate over residues 49–59 (ARFPHLKRPDS). The disordered stretch occupies residues 49–70 (ARFPHLKRPDSPSEQVGARPGE). Residues 83–84 (SL) and Glu117 contribute to the NAD(+) site. Lys119 (N6-AMP-lysine intermediate) is an active-site residue. 4 residues coordinate NAD(+): Arg140, Glu175, Lys291, and Lys315. Residues Cys420, Cys423, Cys438, and Cys444 each coordinate Zn(2+). The BRCT domain maps to 660-739 (ARDSPVAGKT…DGWLKLIEGL (80 aa)).

This sequence belongs to the NAD-dependent DNA ligase family. LigA subfamily. Mg(2+) serves as cofactor. The cofactor is Mn(2+).

It carries out the reaction NAD(+) + (deoxyribonucleotide)n-3'-hydroxyl + 5'-phospho-(deoxyribonucleotide)m = (deoxyribonucleotide)n+m + AMP + beta-nicotinamide D-nucleotide.. Its function is as follows. DNA ligase that catalyzes the formation of phosphodiester linkages between 5'-phosphoryl and 3'-hydroxyl groups in double-stranded DNA using NAD as a coenzyme and as the energy source for the reaction. It is essential for DNA replication and repair of damaged DNA. This is DNA ligase from Ruegeria pomeroyi (strain ATCC 700808 / DSM 15171 / DSS-3) (Silicibacter pomeroyi).